We begin with the raw amino-acid sequence, 88 residues long: UPF0298 protein BcerKBAB4_3759 (88 aa).

The protein belongs to the UPF0298 family.

Its subcellular location is the cytoplasm. This is UPF0298 protein BcerKBAB4_3759 from Bacillus mycoides (strain KBAB4) (Bacillus weihenstephanensis).